The following is a 416-amino-acid chain: MQITILGSGVIGVTTAYYLAKLGHEVTVVDREEGPALETSFANAGQVSPGYASPWAAPGIPFKAAKWLFQKHAPLVLRPTCDPVQYSWLLQMLANCTDSRYKVNKTRMVRVAEYARDCLVDLRKETGIEYDQRMQGTLQLFREQYQLDGIGKDIEVLRQDGVPFEVLDREGCAKVEPALARVKDKFVGGLRLPHDETGDCFKFTNALAKIAEGLGVKFRFGVNIKSLLMSGGKVSGVETSEGVLTADRYVVALGSYTPALVKSLGLNAPIYPVKGYSITAPIVDEDRAPVSTVLDESYKIAITRLGDRIRVGGMAEVSGFTTDLPAARRATLDLSVTDLFPGGDLKAATFWSGLRPMTPDSTPIIGATRYDNVFINAGHGTLGWTMSCGSGKLLADLISGNKPDIRADDLGISRYE.

Residue 3–17 (ITILGSGVIGVTTAY) coordinates FAD.

This sequence belongs to the DadA oxidoreductase family. FAD is required as a cofactor.

It catalyses the reaction a D-alpha-amino acid + A + H2O = a 2-oxocarboxylate + AH2 + NH4(+). The protein operates within amino-acid degradation; D-alanine degradation; NH(3) and pyruvate from D-alanine: step 1/1. In terms of biological role, oxidative deamination of D-amino acids. The protein is D-amino acid dehydrogenase of Brucella anthropi (strain ATCC 49188 / DSM 6882 / CCUG 24695 / JCM 21032 / LMG 3331 / NBRC 15819 / NCTC 12168 / Alc 37) (Ochrobactrum anthropi).